A 170-amino-acid chain; its full sequence is Peptide deformylase (170 aa).

Residues cysteine 91 and histidine 133 each contribute to the Fe cation site. The active site involves glutamate 134. Histidine 137 contacts Fe cation.

The protein belongs to the polypeptide deformylase family. It depends on Fe(2+) as a cofactor.

The enzyme catalyses N-terminal N-formyl-L-methionyl-[peptide] + H2O = N-terminal L-methionyl-[peptide] + formate. Its function is as follows. Removes the formyl group from the N-terminal Met of newly synthesized proteins. Requires at least a dipeptide for an efficient rate of reaction. N-terminal L-methionine is a prerequisite for activity but the enzyme has broad specificity at other positions. The chain is Peptide deformylase from Pectobacterium carotovorum subsp. carotovorum (strain PC1).